A 189-amino-acid chain; its full sequence is RxLR effector protein CRE18 (189 aa).

Residues 1–23 (MSKLFYAFAVLAVHVLTSSPTTA) form the signal peptide. The RxLR-dEER motif lies at 47 to 68 (RFLRSIHEGEDSLKPSAFSEER).

Belongs to the RxLR effector family.

It is found in the secreted. It localises to the host cytoplasm. The protein resides in the host nucleus. Functionally, effector that is involved in host plant infection. Contributes to virulence during the early infection stage, by inhibiting plant defense responses induced by both PAMP-triggered immunity (PTI) and effector-triggered immunity (ETI). The chain is RxLR effector protein CRE18 from Phytophthora infestans (strain T30-4) (Potato late blight agent).